The chain runs to 326 residues: MVKPSKILEKIKKRTEPVAEPVVEEESDEEIIEQEGSEEEEEIVEEESEEEEEEVEEENKNIEENKKDQSIYTKKRVLFTSTRGIGSKYRHLMADLISLIPHSKKEDKIDDRKTLSLINETCEMKSCNYAILFDVRKGTDCFLWMAKTPLGPTVKFHITNVHTLDELQMTGNCLKGSRPFLHFDKSFDSEVHLQLIKELITQIYSTPKGHVKSKPFFDHVFSFFYQDGRIWFRNYQISDQEFKKDSLLTEIGPRMIMHIDKIFSDGFGGSVLYSNPNYVSPNNTRSDHKLSKANKYIKRKYQKGKAEERQKISFIEPSEVDTVFDN.

Residues 1–17 (MVKPSKILEKIKKRTEP) are compositionally biased toward basic and acidic residues. A disordered region spans residues 1–66 (MVKPSKILEK…EENKNIEENK (66 aa)). Residues 22-57 (VVEEESDEEIIEQEGSEEEEEIVEEESEEEEEEVEE) show a composition bias toward acidic residues. The Brix domain occupies 75 to 268 (KRVLFTSTRG…IDKIFSDGFG (194 aa)).

The protein belongs to the BRX1 family.

Its subcellular location is the nucleus. It is found in the nucleolus. Functionally, required for biogenesis of the 60S ribosomal subunit. This is Ribosome biogenesis protein BRX1 homolog (bxdc2) from Dictyostelium discoideum (Social amoeba).